The following is a 1044-amino-acid chain: Isoleucine--tRNA ligase (1044 aa).

The short motif at 48 to 58 is the 'HIGH' region element; sequence PFATGLPHFGH. The short motif at 594–598 is the 'KMSKS' region element; sequence KMSKS. K597 serves as a coordination point for ATP.

This sequence belongs to the class-I aminoacyl-tRNA synthetase family. IleS type 2 subfamily. Monomer. Zn(2+) is required as a cofactor.

It is found in the cytoplasm. The catalysed reaction is tRNA(Ile) + L-isoleucine + ATP = L-isoleucyl-tRNA(Ile) + AMP + diphosphate. Catalyzes the attachment of isoleucine to tRNA(Ile). As IleRS can inadvertently accommodate and process structurally similar amino acids such as valine, to avoid such errors it has two additional distinct tRNA(Ile)-dependent editing activities. One activity is designated as 'pretransfer' editing and involves the hydrolysis of activated Val-AMP. The other activity is designated 'posttransfer' editing and involves deacylation of mischarged Val-tRNA(Ile). The sequence is that of Isoleucine--tRNA ligase from Borrelia recurrentis (strain A1).